The chain runs to 453 residues: Bifunctional protein GlmU (453 aa).

The segment at 1 to 225 (MHAHVILAAG…AEEALGVNTR (225 aa)) is pyrophosphorylase. Residues 7 to 10 (LAAG), lysine 21, glutamine 72, and 77 to 78 (GT) contribute to the UDP-N-acetyl-alpha-D-glucosamine site. Aspartate 102 contacts Mg(2+). UDP-N-acetyl-alpha-D-glucosamine is bound by residues glycine 138, glutamate 152, asparagine 167, and asparagine 223. A Mg(2+)-binding site is contributed by asparagine 223. The tract at residues 226-246 (EELARVEGVLLRRLRAEWMGK) is linker. The segment at 247-453 (GVRMILPETI…GYALRKLGEG (207 aa)) is N-acetyltransferase. Residues arginine 329 and lysine 347 each coordinate UDP-N-acetyl-alpha-D-glucosamine. The active-site Proton acceptor is histidine 359. 2 residues coordinate UDP-N-acetyl-alpha-D-glucosamine: tyrosine 362 and asparagine 373. Acetyl-CoA contacts are provided by residues alanine 376, 382–383 (NY), serine 401, alanine 419, and arginine 436.

The protein in the N-terminal section; belongs to the N-acetylglucosamine-1-phosphate uridyltransferase family. This sequence in the C-terminal section; belongs to the transferase hexapeptide repeat family. As to quaternary structure, homotrimer. The cofactor is Mg(2+).

It is found in the cytoplasm. The catalysed reaction is alpha-D-glucosamine 1-phosphate + acetyl-CoA = N-acetyl-alpha-D-glucosamine 1-phosphate + CoA + H(+). It catalyses the reaction N-acetyl-alpha-D-glucosamine 1-phosphate + UTP + H(+) = UDP-N-acetyl-alpha-D-glucosamine + diphosphate. It functions in the pathway nucleotide-sugar biosynthesis; UDP-N-acetyl-alpha-D-glucosamine biosynthesis; N-acetyl-alpha-D-glucosamine 1-phosphate from alpha-D-glucosamine 6-phosphate (route II): step 2/2. Its pathway is nucleotide-sugar biosynthesis; UDP-N-acetyl-alpha-D-glucosamine biosynthesis; UDP-N-acetyl-alpha-D-glucosamine from N-acetyl-alpha-D-glucosamine 1-phosphate: step 1/1. It participates in bacterial outer membrane biogenesis; LPS lipid A biosynthesis. Catalyzes the last two sequential reactions in the de novo biosynthetic pathway for UDP-N-acetylglucosamine (UDP-GlcNAc). The C-terminal domain catalyzes the transfer of acetyl group from acetyl coenzyme A to glucosamine-1-phosphate (GlcN-1-P) to produce N-acetylglucosamine-1-phosphate (GlcNAc-1-P), which is converted into UDP-GlcNAc by the transfer of uridine 5-monophosphate (from uridine 5-triphosphate), a reaction catalyzed by the N-terminal domain. The protein is Bifunctional protein GlmU of Thermus thermophilus (strain ATCC 27634 / DSM 579 / HB8).